Consider the following 738-residue polypeptide: MDPFFLNTQHVELLVSGKQSSPQDLLGIVSESLNQDRIVLFRPGAETVFVELRGKIQQAESHHSGIFSLPVMKGISPQDYRVYHQNGLLAHDPYAFPLLWGEIDSFLFHEGTHQRIYERMGAIPCEIDGVPGVRFIVWAPHAQRVSVIGDFNGWHGLVNPLHKVSDQGVWELFVPGLTAGACYKWEMVTESGQVLIKSDPYGKFFGPPPRSVSVVIDDSYEWTDSEWLEERIKKTEGPMNIYEVHVGSWRWQEGQPLNYRELADQLALYCKQMHYTHVELLPVTEHPLNESWGYQTTGYYAPTSRYGSFEDLQYFIDTMHQHGIGVILDWVPGHFPIDSFAMSGFDGTPLYEYTRNPSPLHPHWHTYTFDYAKPEVCNFLLGSVLFWIDKMHVDGIRVDAVSSMLYLDYGRYAGEWVPNRYGGRENLDAIRFLQQFNTVIHEKYPGVLTFAEESTTFPKITVSVEEGGLGFDYKWNMGWMHDTLHYFEKDFPYRPYHQSDLTFPQWYAFSERFLLPFSHDEVVHGKRSLIGKMPGDAWRQFAQLRLLLGYQICQPGKKLLFMGGEFGQGREWSPGRELDWELLDISYHQGVHLCSQELNALYVQSPQLWQADHLPSSFRWVDFSDVRNGVVAYLRFADADAKKALLCVHHFGVGYFPHYLLPILPLESCDLLMNTDDTRFGGSGKGFREPEILTPEIARQEREAAGLIEADDESGPDCWGLDIELPPSATLIFSVTLQ.

The active-site Nucleophile is aspartate 399. Residue glutamate 452 is the Proton donor of the active site.

It belongs to the glycosyl hydrolase 13 family. GlgB subfamily. In terms of assembly, monomer.

The catalysed reaction is Transfers a segment of a (1-&gt;4)-alpha-D-glucan chain to a primary hydroxy group in a similar glucan chain.. It participates in glycan biosynthesis; glycogen biosynthesis. In terms of biological role, catalyzes the formation of the alpha-1,6-glucosidic linkages in glycogen by scission of a 1,4-alpha-linked oligosaccharide from growing alpha-1,4-glucan chains and the subsequent attachment of the oligosaccharide to the alpha-1,6 position. The polypeptide is 1,4-alpha-glucan branching enzyme GlgB (Chlamydia trachomatis serovar A (strain ATCC VR-571B / DSM 19440 / HAR-13)).